Here is a 218-residue protein sequence, read N- to C-terminus: Putative glutamine transport system permease protein GlnP (218 aa).

Positions 19–208 (TLITLKYSVI…ILVMLISFIA (190 aa)) constitute an ABC transmembrane type-1 domain. The next 4 membrane-spanning stretches (helical) occupy residues 25 to 45 (YSVI…LCKV), 57 to 79 (FYTS…FASP), 86 to 108 (FTVF…SEVI), and 187 to 207 (FFPM…ISFI).

This sequence belongs to the binding-protein-dependent transport system permease family. HisMQ subfamily.

The protein localises to the cell inner membrane. Functionally, part of the binding-protein-dependent transport system for glutamine; probably responsible for the translocation of the substrate across the membrane. The chain is Putative glutamine transport system permease protein GlnP (glnP) from Rickettsia bellii (strain RML369-C).